The chain runs to 424 residues: Histidinol dehydrogenase homolog (424 aa).

Zn(2+) contacts are provided by glutamine 250 and histidine 253. Catalysis depends on proton acceptor residues glutamate 318 and histidine 319. Zn(2+) contacts are provided by aspartate 352 and histidine 411.

It belongs to the histidinol dehydrogenase family. Zn(2+) is required as a cofactor.

The protein is Histidinol dehydrogenase homolog of Shouchella clausii (strain KSM-K16) (Alkalihalobacillus clausii).